The following is a 149-amino-acid chain: Large ribosomal subunit protein bL9 (149 aa).

It belongs to the bacterial ribosomal protein bL9 family.

Functionally, binds to the 23S rRNA. The chain is Large ribosomal subunit protein bL9 from Haemophilus influenzae (strain PittGG).